A 432-amino-acid polypeptide reads, in one-letter code: Transcobalamin-2 (432 aa).

The signal sequence occupies residues 1–18 (MGHLGALLFLLGGLGALA). 3 disulfide bridges follow: cysteine 21–cysteine 270, cysteine 116–cysteine 312, and cysteine 165–cysteine 208. N-linked (GlcNAc...) asparagine glycosylation occurs at asparagine 94. Cob(II)alamin is bound by residues glutamine 104, 152 to 156 (TSYYQ), histidine 193, 193 to 197 (HVSVD), asparagine 245, serine 248, glutamine 294, and 400 to 402 (WQV).

This sequence belongs to the eukaryotic cobalamin transport proteins family. Interacts with CD320 (via LDL-receptor class A domains). Expressed in mammary gland, kidney, lymphatic nodes and liver.

Its subcellular location is the secreted. In terms of biological role, primary vitamin B12-binding and transport protein. Delivers cobalamin to cells. In Bos taurus (Bovine), this protein is Transcobalamin-2 (TCN2).